A 372-amino-acid chain; its full sequence is Glutamate 5-kinase (372 aa).

Residue lysine 14 participates in ATP binding. 3 residues coordinate substrate: serine 54, aspartate 141, and asparagine 153. ATP-binding positions include 173–174 and 215–221; these read TD and TGGMATK. The PUA domain occupies 280–358; it reads KGKLVLDVGA…DEIESLLGYD (79 aa).

This sequence belongs to the glutamate 5-kinase family.

Its subcellular location is the cytoplasm. It catalyses the reaction L-glutamate + ATP = L-glutamyl 5-phosphate + ADP. Its pathway is amino-acid biosynthesis; L-proline biosynthesis; L-glutamate 5-semialdehyde from L-glutamate: step 1/2. In terms of biological role, catalyzes the transfer of a phosphate group to glutamate to form L-glutamate 5-phosphate. This chain is Glutamate 5-kinase, found in Shewanella woodyi (strain ATCC 51908 / MS32).